The chain runs to 241 residues: Deoxynucleotide monophosphate kinase (241 aa).

Residue lysine 10 coordinates dGMP. 4 residues coordinate ATP: arginine 11, glycine 13, aspartate 15, and threonine 16. DGMP-binding residues include isoleucine 36 and lysine 37. Residue tyrosine 42 coordinates Mg(2+). Arginine 68 serves as a coordination point for dGMP. Mg(2+)-binding residues include glutamine 85 and glutamate 108. 10 residues coordinate dGMP: arginine 132, glycine 139, threonine 140, valine 144, tryptophan 152, aspartate 175, arginine 177, glutamine 178, glutamate 181, and threonine 208.

Belongs to the dNMP kinase family. In terms of assembly, homodimer. Mg(2+) serves as cofactor.

The enzyme catalyses dTMP + ATP = dTDP + ADP. It catalyses the reaction dGMP + ATP = dGDP + ADP. It carries out the reaction 5-hydroxymethyl-dCMP + ATP = 5-hydroxymethyl-dCDP + ADP. With respect to regulation, inhibited by pyridoxal 5'-phosphate and diethylpyrocarbonate. In terms of biological role, allows the synthesis of deoxyribonucleoside triphosphates necessary for the rapid viral DNA replication. Phosphorylates dGMP, dTMP and 5-hydroxymethyl-dCMP (hmdCMP) while excluding dCMP and dAMP. The phosphorylation of 5-hydroxymethyl-dCMP represents the first step in the replacement of cytosine by hydroxymethylcytosine in new viral DNA genomes. This Enterobacteria phage T4 (Bacteriophage T4) protein is Deoxynucleotide monophosphate kinase (1).